Reading from the N-terminus, the 234-residue chain is Small ribosomal subunit protein eS4 (234 aa).

The 62-residue stretch at 38–99 (IPLLIALRDY…GNDYLVSYDR (62 aa)) folds into the S4 RNA-binding; degenerate domain.

Belongs to the eukaryotic ribosomal protein eS4 family.

This Picrophilus torridus (strain ATCC 700027 / DSM 9790 / JCM 10055 / NBRC 100828 / KAW 2/3) protein is Small ribosomal subunit protein eS4 (rps4e).